We begin with the raw amino-acid sequence, 491 residues long: Synaptotagmin-9 (491 aa).

Residues 1–52 (MPGARDALCHQALQLLAELCARGALEHDSCQDFIYHLRDRARPRLRDPDISV) lie on the Vesicular side of the membrane. Positions 9-31 (CHQALQLLAELCARGALEHDSCQ) are cysteine motif. A helical membrane pass occupies residues 53–73 (SLLTLVVTACGLALFGVSLFV). The Cytoplasmic segment spans residues 74 to 491 (SWKLCWVPWR…AHWHSLVEKR (418 aa)). Serine 177 carries the post-translational modification Phosphoserine. 2 C2 domains span residues 220-341 (ACGK…ILWK) and 352-485 (DLGE…AHWH). Positions 251, 257, 309, 310, 311, 314, 317, 383, 389, 443, and 445 each coordinate Ca(2+).

It belongs to the synaptotagmin family. As to quaternary structure, homodimer; disulfide-linked via the cysteine motif. Can also form heterodimers with SYT3, SYT6, SYT7 and SYT10. Requires Ca(2+) as cofactor.

It is found in the cytoplasmic vesicle. It localises to the secretory vesicle. The protein resides in the synaptic vesicle membrane. In terms of biological role, may be involved in Ca(2+)-dependent exocytosis of secretory vesicles through Ca(2+) and phospholipid binding to the C2 domain or may serve as Ca(2+) sensors in the process of vesicular trafficking and exocytosis. This Homo sapiens (Human) protein is Synaptotagmin-9 (SYT9).